We begin with the raw amino-acid sequence, 549 residues long: Small ribosomal subunit protein bS1 (549 aa).

6 consecutive S1 motif domains span residues 21 to 87 (GSIV…LSRE), 105 to 171 (KATV…VSRR), 192 to 260 (GSEV…LGLK), 277 to 347 (NSKL…LGLK), 364 to 434 (GDKV…LGIK), and 451 to 512 (GAVV…LSVK).

It belongs to the bacterial ribosomal protein bS1 family.

Its function is as follows. Binds mRNA; thus facilitating recognition of the initiation point. It is needed to translate mRNA with a short Shine-Dalgarno (SD) purine-rich sequence. This Haemophilus influenzae (strain ATCC 51907 / DSM 11121 / KW20 / Rd) protein is Small ribosomal subunit protein bS1 (rpsA).